We begin with the raw amino-acid sequence, 66 residues long: MAKGKDVRIRVILECISCVRKGTNKESTGISRYSTQKNRHNTPGQLELRKFCRYCRKHTTHNEIKK.

It belongs to the bacterial ribosomal protein bL33 family.

It is found in the plastid. It localises to the chloroplast. In Saccharum officinarum (Sugarcane), this protein is Large ribosomal subunit protein bL33c.